Reading from the N-terminus, the 81-residue chain is ATP synthase subunit c (81 aa).

Transmembrane regions (helical) follow at residues 14–34 and 60–80; these read YLGA…IGTV and LAFA…LLFV.

This sequence belongs to the ATPase C chain family. In terms of assembly, F-type ATPases have 2 components, F(1) - the catalytic core - and F(0) - the membrane proton channel. F(1) has five subunits: alpha(3), beta(3), gamma(1), delta(1), epsilon(1). F(0) has three main subunits: a(1), b(2) and c(10-14). The alpha and beta chains form an alternating ring which encloses part of the gamma chain. F(1) is attached to F(0) by a central stalk formed by the gamma and epsilon chains, while a peripheral stalk is formed by the delta and b chains.

It is found in the cell membrane. Functionally, f(1)F(0) ATP synthase produces ATP from ADP in the presence of a proton or sodium gradient. F-type ATPases consist of two structural domains, F(1) containing the extramembraneous catalytic core and F(0) containing the membrane proton channel, linked together by a central stalk and a peripheral stalk. During catalysis, ATP synthesis in the catalytic domain of F(1) is coupled via a rotary mechanism of the central stalk subunits to proton translocation. Its function is as follows. Key component of the F(0) channel; it plays a direct role in translocation across the membrane. A homomeric c-ring of between 10-14 subunits forms the central stalk rotor element with the F(1) delta and epsilon subunits. In Clostridium acetobutylicum (strain ATCC 824 / DSM 792 / JCM 1419 / IAM 19013 / LMG 5710 / NBRC 13948 / NRRL B-527 / VKM B-1787 / 2291 / W), this protein is ATP synthase subunit c.